Consider the following 46-residue polypeptide: Large ribosomal subunit protein bL33B (46 aa).

The protein belongs to the bacterial ribosomal protein bL33 family.

The sequence is that of Large ribosomal subunit protein bL33B (rpmG2) from Mycoplasmopsis pulmonis (strain UAB CTIP) (Mycoplasma pulmonis).